Consider the following 443-residue polypeptide: F-box/LRR-repeat protein At2g42720 (443 aa).

The 47-residue stretch at 1-47 folds into the F-box domain; the sequence is MDRISSLPDEILEHILSFLSTKEAALTSSLSTRWKNVFVFVPSLHLD. LRR repeat units lie at residues 139–167, 169–194, 201–236, 271–296, 323–348, and 363–389; these read KLRLGRGFTIKLCHENVYLPMLKTLCLDT, DFDGDHNVFETLLPRCPLLEELVLED, CGSVSSPSLKRLRIRFFHIPIISLDVPGLVYLELSC, SSHLVPADMMDLITGIRKVKVLHLTS, DKKQGWQILPLLIKNSPNLETLVFKG, and CSGILGKSSSCLSSSRVKVLEIWSYQG.

This is F-box/LRR-repeat protein At2g42720 from Arabidopsis thaliana (Mouse-ear cress).